A 345-amino-acid chain; its full sequence is S-adenosylmethionine:tRNA ribosyltransferase-isomerase (345 aa).

This sequence belongs to the QueA family. Monomer.

It localises to the cytoplasm. It catalyses the reaction 7-aminomethyl-7-carbaguanosine(34) in tRNA + S-adenosyl-L-methionine = epoxyqueuosine(34) in tRNA + adenine + L-methionine + 2 H(+). It functions in the pathway tRNA modification; tRNA-queuosine biosynthesis. Its function is as follows. Transfers and isomerizes the ribose moiety from AdoMet to the 7-aminomethyl group of 7-deazaguanine (preQ1-tRNA) to give epoxyqueuosine (oQ-tRNA). This Finegoldia magna (strain ATCC 29328 / DSM 20472 / WAL 2508) (Peptostreptococcus magnus) protein is S-adenosylmethionine:tRNA ribosyltransferase-isomerase.